The primary structure comprises 1143 residues: ATP-dependent helicase/deoxyribonuclease subunit B (1143 aa).

One can recognise a UvrD-like helicase ATP-binding domain in the interval 1–274 (MNYMHLGRAG…YGQTVKFQST (274 aa)). 7–14 (GRAGTGKT) serves as a coordination point for ATP. The UvrD-like helicase C-terminal domain maps to 267–565 (QTVKFQSTGL…RFSLVPPSLD (299 aa)). Residues Cys782, Cys1104, Cys1107, and Cys1113 each contribute to the [4Fe-4S] cluster site.

This sequence belongs to the helicase family. AddB/RexB type 1 subfamily. In terms of assembly, heterodimer of AddA and AddB. The cofactor is Mg(2+). It depends on [4Fe-4S] cluster as a cofactor.

Its function is as follows. The heterodimer acts as both an ATP-dependent DNA helicase and an ATP-dependent, dual-direction single-stranded exonuclease. Recognizes the chi site generating a DNA molecule suitable for the initiation of homologous recombination. The AddB subunit has 5' -&gt; 3' nuclease activity but not helicase activity. This Exiguobacterium sibiricum (strain DSM 17290 / CCUG 55495 / CIP 109462 / JCM 13490 / 255-15) protein is ATP-dependent helicase/deoxyribonuclease subunit B.